The following is a 362-amino-acid chain: Methionine import ATP-binding protein MetN (362 aa).

The ABC transporter domain maps to 23–258 (VRLTDVKRRF…PQAEITGSLL (236 aa)). Position 55 to 62 (55 to 62 (GRSGAGKS)) interacts with ATP.

Belongs to the ABC transporter superfamily. Methionine importer (TC 3.A.1.24) family. As to quaternary structure, the complex is composed of two ATP-binding proteins (MetN), two transmembrane proteins (MetI) and a solute-binding protein (MetQ).

Its subcellular location is the cell inner membrane. The catalysed reaction is L-methionine(out) + ATP + H2O = L-methionine(in) + ADP + phosphate + H(+). The enzyme catalyses D-methionine(out) + ATP + H2O = D-methionine(in) + ADP + phosphate + H(+). Part of the ABC transporter complex MetNIQ involved in methionine import. Responsible for energy coupling to the transport system. The polypeptide is Methionine import ATP-binding protein MetN (Rhizobium johnstonii (strain DSM 114642 / LMG 32736 / 3841) (Rhizobium leguminosarum bv. viciae)).